A 396-amino-acid polypeptide reads, in one-letter code: Elongation factor Tu (396 aa).

One can recognise a tr-type G domain in the interval 10–206; sequence KLHVNVGTIG…ALDTHIPNPE (197 aa). Residues 19 to 26 are G1; sequence GHVDHGKT. 19-26 is a GTP binding site; the sequence is GHVDHGKT. A Mg(2+)-binding site is contributed by Thr26. Residues 60 to 64 form a G2 region; the sequence is GITIS. A G3 region spans residues 81-84; sequence DCPG. GTP is bound by residues 81-85 and 136-139; these read DCPGH and NKAD. The interval 136–139 is G4; the sequence is NKAD. The segment at 174–176 is G5; that stretch reads SAL.

This sequence belongs to the TRAFAC class translation factor GTPase superfamily. Classic translation factor GTPase family. EF-Tu/EF-1A subfamily. In terms of assembly, monomer.

The protein localises to the cytoplasm. The enzyme catalyses GTP + H2O = GDP + phosphate + H(+). GTP hydrolase that promotes the GTP-dependent binding of aminoacyl-tRNA to the A-site of ribosomes during protein biosynthesis. The protein is Elongation factor Tu of Xylella fastidiosa (strain 9a5c).